The primary structure comprises 153 residues: UPF0251 protein CT0950 (153 aa).

Belongs to the UPF0251 family.

The sequence is that of UPF0251 protein CT0950 from Chlorobaculum tepidum (strain ATCC 49652 / DSM 12025 / NBRC 103806 / TLS) (Chlorobium tepidum).